Here is a 283-residue protein sequence, read N- to C-terminus: Peflin (283 aa).

Tandem repeats lie at residues 21 to 30 (PQTNYYGGQQ), 36 to 44 (QPAASYGRP), 45 to 54 (APGAPYGSPP), 55 to 62 (SGGVYGHP), 71 to 79 (APGGPYGGQ), 80 to 87 (APGGPYSV), 88 to 95 (PGSTPYGS), and 96 to 104 (QQHGSYGQG). Positions 21-104 (PQTNYYGGQQ…SQQHGSYGQG (84 aa)) are 8 X 9 AA approximate tandem repeat of [AP]-P-G-G-P-Y-G-G-P-P. The segment covering 37–70 (PAASYGRPAPGAPYGSPPSGGVYGHPVPGSAAPG) has biased composition (low complexity). Residues 37–113 (PAASYGRPAP…GAPAGNIPPG (77 aa)) form a disordered region. Gly residues predominate over residues 71 to 81 (APGGPYGGQAP). Residues 93–104 (YGSQQHGSYGQG) show a composition bias toward low complexity. 5 consecutive EF-hand domains span residues 113–148 (GVDPEAFSWFQTVDTDHSGYISLKELKQALVNTNWS), 154–179 (TCTMMMNMFDKSNSGRIDMFGFSALW), 180–215 (RFIQQWRNLFQQYDRDRSGSINQGELHQALCQMGYQ), 216–252 (LSPQFVQIVMSRYAQRSAQPGLQLDRFIQICTQLQSM), and 253–282 (TEAFREKDTGQIGTAKLSYEDFITMTTTRL). Ca(2+) contacts are provided by D126, D128, S130, Y132, and E137. Ca(2+)-binding residues include D193, D195, S197, S199, and E204.

As to quaternary structure, heterodimer; heterodimerizes (via the EF-hand 5) with pdcd6.

It is found in the cytoplasm. The protein resides in the endoplasmic reticulum. It localises to the membrane. Its subcellular location is the cytoplasmic vesicle. The protein localises to the COPII-coated vesicle membrane. In terms of biological role, calcium-binding protein that acts as an adapter that bridges unrelated proteins or stabilizes weak protein-protein complexes in response to calcium. Acts as a negative regulator of ER-Golgi transport. The chain is Peflin from Xenopus laevis (African clawed frog).